The primary structure comprises 751 residues: Putative tyrosine-protein kinase EpsB (751 aa).

Residues 1-31 are Cytoplasmic-facing; the sequence is MTQNLSQPPAVNAPESELDLVRYLDVLVANR. A helical membrane pass occupies residues 32-52; it reads WLIAGIAAVVMLLGATYAFLA. Residues 53-444 are Periplasmic-facing; sequence RPVYEADVLV…VPEEPVKPKK (392 aa). A helical transmembrane segment spans residues 445–465; the sequence is LTVTALAGVLGVVLGVVAAFV. Topologically, residues 466–751 are cytoplasmic; it reads RNTLFGGITE…PSAEAEAESA (286 aa).

Belongs to the etk/wzc family.

Its subcellular location is the cell inner membrane. The catalysed reaction is L-tyrosyl-[protein] + ATP = O-phospho-L-tyrosyl-[protein] + ADP + H(+). Its function is as follows. Probably involved in polymerization and/or export of exopolysaccharide EPS I which functions as a virulence factor. May be involved in an ATP-dependent process in the pathway for EPS I production, possibly export of the trimeric repeat units across the inner membrane or their polymerization. The protein is Putative tyrosine-protein kinase EpsB (epsB) of Ralstonia nicotianae (strain ATCC BAA-1114 / GMI1000) (Ralstonia solanacearum).